A 152-amino-acid polypeptide reads, in one-letter code: UPF0225 protein YchJ (152 aa).

Belongs to the UPF0225 family.

This Escherichia coli O6:K15:H31 (strain 536 / UPEC) protein is UPF0225 protein YchJ.